Reading from the N-terminus, the 259-residue chain is Phosphatidylglycerol--prolipoprotein diacylglyceryl transferase (259 aa).

The next 4 membrane-spanning stretches (helical) occupy residues 12–32 (LSLH…VYLA), 46–66 (IIDF…IYYV), 83–103 (IWNG…VLFV), and 109–129 (VLNP…AQAI). R131 provides a ligand contact to a 1,2-diacyl-sn-glycero-3-phospho-(1'-sn-glycerol). The next 3 helical transmembrane spans lie at 167-187 (VPTF…IMVW), 194-214 (LLDG…RLVI), and 226-246 (GIRV…VFIF).

The protein belongs to the Lgt family.

Its subcellular location is the cell membrane. The enzyme catalyses L-cysteinyl-[prolipoprotein] + a 1,2-diacyl-sn-glycero-3-phospho-(1'-sn-glycerol) = an S-1,2-diacyl-sn-glyceryl-L-cysteinyl-[prolipoprotein] + sn-glycerol 1-phosphate + H(+). Its pathway is protein modification; lipoprotein biosynthesis (diacylglyceryl transfer). Catalyzes the transfer of the diacylglyceryl group from phosphatidylglycerol to the sulfhydryl group of the N-terminal cysteine of a prolipoprotein, the first step in the formation of mature lipoproteins. This is Phosphatidylglycerol--prolipoprotein diacylglyceryl transferase from Streptococcus equi subsp. zooepidemicus (strain MGCS10565).